Here is a 648-residue protein sequence, read N- to C-terminus: Macrolide export ATP-binding/permease protein MacB (648 aa).

In terms of domain architecture, ABC transporter spans 5-243 (LELKDIRRSY…AGGTEPVVNT (239 aa)). Position 41 to 48 (41 to 48 (GASGSGKS)) interacts with ATP. 4 consecutive transmembrane segments (helical) span residues 273-293 (LLTM…VVVG), 523-543 (LFLT…VMNI), 576-596 (AVLV…LIAF), and 600-620 (LFLP…AFLC).

This sequence belongs to the ABC transporter superfamily. Macrolide exporter (TC 3.A.1.122) family. In terms of assembly, homodimer. Part of the tripartite efflux system MacAB-TolC, which is composed of an inner membrane transporter, MacB, a periplasmic membrane fusion protein, MacA, and an outer membrane component, TolC. The complex forms a large protein conduit and can translocate molecules across both the inner and outer membranes. Interacts with MacA.

The protein localises to the cell inner membrane. Part of the tripartite efflux system MacAB-TolC. MacB is a non-canonical ABC transporter that contains transmembrane domains (TMD), which form a pore in the inner membrane, and an ATP-binding domain (NBD), which is responsible for energy generation. Confers resistance against macrolides. The sequence is that of Macrolide export ATP-binding/permease protein MacB from Shigella sonnei (strain Ss046).